The following is a 517-amino-acid chain: Urethanase (517 aa).

Residues Lys-98 and Ser-173 each act as charge relay system in the active site. The Acyl-ester intermediate role is filled by Ser-197.

The protein belongs to the amidase family. As to quaternary structure, homooctamer.

It carries out the reaction urethane + H2O + H(+) = ethanol + NH4(+) + CO2. With respect to regulation, exhibits poor salt tolerance but excellent tolerance to low concentrations of ethanol. EDTA has almost no impact on activity. Activity is increased in the presence of Ca(2+), Mg(2+) and Co(3+) and inhibited in the presence of Al(3+), Zn(2+) and Cu(2+). Hydrolase that can catalyze the degradation of ethyl carbamate (also called urethane), a probable human carcinogen widely found in alcoholic beverages. Can also use methyl carbamate, butyl carbamate, acetamide and urea. Also catalyzes the enantioselective hydrolysis of 2-phenylpropionamide, alpha-chlorophenylacetamide, 2-methyl-3-phenylpropionamide and alpha-methoxyphenylacetamide to the corresponding acids. Is inactive on benzamide and L-glutamine. The sequence is that of Urethanase from Rhizobium radiobacter (Agrobacterium tumefaciens).